Reading from the N-terminus, the 250-residue chain is 2,3-bisphosphoglycerate-dependent phosphoglycerate mutase (250 aa).

Residues 10 to 17, 23 to 24, R62, 89 to 92, K100, 116 to 117, and 185 to 186 contribute to the substrate site; these read RHGESQWN, TG, ERHY, RR, and GN. The Tele-phosphohistidine intermediate role is filled by H11. E89 functions as the Proton donor/acceptor in the catalytic mechanism.

The protein belongs to the phosphoglycerate mutase family. BPG-dependent PGAM subfamily. In terms of assembly, homodimer.

It catalyses the reaction (2R)-2-phosphoglycerate = (2R)-3-phosphoglycerate. The protein operates within carbohydrate degradation; glycolysis; pyruvate from D-glyceraldehyde 3-phosphate: step 3/5. In terms of biological role, catalyzes the interconversion of 2-phosphoglycerate and 3-phosphoglycerate. The polypeptide is 2,3-bisphosphoglycerate-dependent phosphoglycerate mutase (Shigella boydii serotype 4 (strain Sb227)).